The chain runs to 303 residues: Glucose-1-phosphate thymidylyltransferase (303 aa).

Positions 108 and 222 each coordinate Mg(2+).

This sequence belongs to the glucose-1-phosphate thymidylyltransferase family. Requires Mg(2+) as cofactor.

It carries out the reaction dTTP + alpha-D-glucose 1-phosphate + H(+) = dTDP-alpha-D-glucose + diphosphate. In terms of biological role, catalyzes the formation of dTDP-glucose, from dTTP and glucose 1-phosphate, as well as its pyrophosphorolysis. Probably involved in the biosynthesis of the acarviose moiety of the alpha-glucosidase inhibitor acarbose. This chain is Glucose-1-phosphate thymidylyltransferase (acbA), found in Actinoplanes sp. (strain ATCC 31044 / CBS 674.73 / SE50/110).